The following is a 330-amino-acid chain: Catharanthine synthase (330 aa).

An Involved in the stabilization of the negatively charged intermediate by the formation of the oxyanion hole motif is present at residues 81-83 (HGA). Gly84 is a binding site for catharanthine. Ser173 (proton acceptor) is an active-site residue. Asp274 is an active-site residue. Tyr305 contacts catharanthine. Tyr305 functions as the Proton donor/acceptor in the catalytic mechanism.

Belongs to the 'GDXG' lipolytic enzyme family. As to quaternary structure, interacts with dehydroprecondylocarpine acetate synthase (DPAS). As to expression, expressed in leaf epidermis.

The protein resides in the cytoplasm. Its subcellular location is the cytosol. It localises to the nucleus. It catalyses the reaction dehydrosecodine = catharanthine. It functions in the pathway alkaloid biosynthesis. Its function is as follows. Component of iboga and aspidosperma monoterpenoid indole alkaloids (MIAs, e.g. tabersonine and catharanthine) biosynthesis pathway from 19E-geissoschizine, psychoactive compounds likely to be used in the treatment of opioid dependence. Catalyzes the conversion of dehydrosecodine to catharanthine. The chain is Catharanthine synthase from Catharanthus roseus (Madagascar periwinkle).